Consider the following 131-residue polypeptide: MTVTDPIADMLVRIKNANMRRHPTVDVPYSKMKEKIIEILLREGYIAKYEVIGEIPQKYIRVYLKYKGKTPVIQDVKRVSKPGRRYYVNKEEIPRVLGGLGIAILSTSKGIMTDKEARLLGIGGELICMVW.

The protein belongs to the universal ribosomal protein uS8 family. Part of the 30S ribosomal subunit. Contacts proteins S5 and S12.

Its function is as follows. One of the primary rRNA binding proteins, it binds directly to 16S rRNA central domain where it helps coordinate assembly of the platform of the 30S subunit. This chain is Small ribosomal subunit protein uS8, found in Dictyoglomus turgidum (strain DSM 6724 / Z-1310).